The following is a 155-amino-acid chain: DNA gyrase inhibitor (155 aa).

It belongs to the DNA gyrase inhibitor family. Interacts with DNA gyrase.

It is found in the cytoplasm. Inhibits the supercoiling activity of DNA gyrase. Acts by inhibiting DNA gyrase at an early step, prior to (or at the step of) binding of DNA by the gyrase. It protects cells against toxins that target DNA gyrase, by inhibiting activity of these toxins and reducing the formation of lethal double-strand breaks in the cell. This chain is DNA gyrase inhibitor, found in Salmonella typhi.